The chain runs to 260 residues: Isoprenyl transferase (260 aa).

The active site involves Asp38. Residue Asp38 coordinates Mg(2+). Substrate contacts are provided by residues 39 to 42 (GNGR), Trp43, Arg51, His55, and 83 to 85 (STE). Asn86 acts as the Proton acceptor in catalysis. Substrate is bound by residues Trp87, Arg89, Arg206, and 212–214 (RLS). Glu225 serves as a coordination point for Mg(2+).

The protein belongs to the UPP synthase family. As to quaternary structure, homodimer. The cofactor is Mg(2+).

Its function is as follows. Catalyzes the condensation of isopentenyl diphosphate (IPP) with allylic pyrophosphates generating different type of terpenoids. This is Isoprenyl transferase from Heliobacterium mobile (Heliobacillus mobilis).